The primary structure comprises 336 residues: 4-aminobenzoate N-oxygenase (336 aa).

Residue Tyr-93 participates in 4-nitrobenzoate binding. Glu-101, Glu-136, His-139, and Glu-196 together coordinate Fe cation. Position 200 (Asn-200) interacts with 4-nitrobenzoate. His-223, Glu-227, and His-230 together coordinate Fe cation.

It belongs to the AurF N-oxygenase family. As to quaternary structure, homodimer. Fe(2+) is required as a cofactor.

It carries out the reaction 4-aminobenzoate + AH2 + 2 O2 = 4-nitrobenzoate + A + 2 H2O. The protein operates within antibiotic biosynthesis. Functionally, involved in the biosynthesis of the polyketide antibiotic aureothin. Catalyzes the oxidation of p-aminobenzoate (pABA) to p-nitrobenzoate (pNBA), an unusual polyketide synthase starter unit. Reaction mechanism involves the generation of a peroxodiiron(III/III) intermediate, which effects the initial oxidation of p-aminobenzoate to p-hydroxylaminobenzoate (Ar-NHOH). Ar-NHOH is then probably directly converted to the fully oxidized p-nitrobenzoate via a four-electron N-oxidation, bypassing the formation of a nitroso compound. The polypeptide is 4-aminobenzoate N-oxygenase (Streptomyces thioluteus).